We begin with the raw amino-acid sequence, 80 residues long: Conotoxin Bu14 (80 aa).

Residues 1–8 form the signal peptide; that stretch reads AACQLGTA. Residues 9–40 constitute a propeptide that is removed on maturation; the sequence is ASFARDKQDYPAVRSDGRQDSKDSTLDRIAKR. 3 disulfides stabilise this stretch: Cys41-Cys55, Cys48-Cys59, and Cys54-Cys69.

Belongs to the conotoxin O1 superfamily. As to expression, expressed by the venom duct.

Its subcellular location is the secreted. The polypeptide is Conotoxin Bu14 (Conus bullatus (Bubble cone)).